The primary structure comprises 250 residues: MLINVISIFPKMFDIIKDYGITKRAIQKHLVKINVLNPRKFTKNKYKNIDDRPYGGGPGMIMTAEPLFLAINQAKSLSSNPVKVFYLSPQGKKLDQSKIMELSHQKHIILLCGRYEGIDERLLISKIIDEEISIGDYVLSGGELPAMVLIDSICRVTPGVLKNSKAIQEDSFYNGLLDYPHYTRPKCFNCIKIPNILLSGNHSEIKRWRLKQSLTKTWLKRPDLLNKLILTKEQESILHECQSKMDKPKI.

Residues Gly-113 and 134–139 (IGDYVL) contribute to the S-adenosyl-L-methionine site.

The protein belongs to the RNA methyltransferase TrmD family. In terms of assembly, homodimer.

Its subcellular location is the cytoplasm. The catalysed reaction is guanosine(37) in tRNA + S-adenosyl-L-methionine = N(1)-methylguanosine(37) in tRNA + S-adenosyl-L-homocysteine + H(+). Specifically methylates guanosine-37 in various tRNAs. In Buchnera aphidicola subsp. Baizongia pistaciae (strain Bp), this protein is tRNA (guanine-N(1)-)-methyltransferase.